Here is a 121-residue protein sequence, read N- to C-terminus: Large ribosomal subunit protein uL14 (121 aa).

The protein belongs to the universal ribosomal protein uL14 family. As to quaternary structure, part of the 50S ribosomal subunit. Forms a cluster with proteins L3 and L19. In the 70S ribosome, L14 and L19 interact and together make contacts with the 16S rRNA in bridges B5 and B8.

Functionally, binds to 23S rRNA. Forms part of two intersubunit bridges in the 70S ribosome. The chain is Large ribosomal subunit protein uL14 from Legionella pneumophila (strain Paris).